The sequence spans 456 residues: Protein ESC2 (456 aa).

Over residues 1 to 24 the composition is skewed to polar residues; sequence MTGDSRSISEPSINLDPDNTSFSD. The interval 1–154 is disordered; it reads MTGDSRSISE…SSIRSISPAG (154 aa). Acidic residues predominate over residues 25–43; the sequence is ENSDDFFMDNSYDIDEIDH. Polar residues predominate over residues 83–93; it reads QSLSRSSSKNV. Residues S90, S125, and S126 each carry the phosphoserine modification. The SUMO-like region 1 repeat unit spans residues 169-287; sequence ENDDFFKELA…QDFENEVSDI (119 aa). A coiled-coil region spans residues 301–360; sequence EATLESKLKEEEAALLIKERQEMERKLEKKRNEQEESEYREFESELKNVEETQEIKENDT. Residues 380-456 form an SUMO-like region 2 repeat; the sequence is MEEVMRIALM…DEDMVDVIID (77 aa).

Component of a cullin-RING ligase (CRL)-like complex composed of at least the cullin RTT101, a linker protein MMS1, and the potential substrate receptor ESC2. Interacts with RTT101 and MMS1. Interacts with SIR2.

The protein localises to the cytoplasm. The protein resides in the nucleus. May be a substrate targeting component of a cullin-RING-based E3 ubiquitin-protein ligase complex RTT101(MMS1-ESC2). Involved in HMR and telomere silencing via the recruitment or stabilizing of the SIR (silent information regulators) complex. This Saccharomyces cerevisiae (strain ATCC 204508 / S288c) (Baker's yeast) protein is Protein ESC2 (ESC2).